Consider the following 166-residue polypeptide: MPDELRAEKSFQSKPYDSLKNKSEFDRVYQKGFKKHNLFFSLFVLDLSKEPPKGKEGFKDPLSCRLKDKKTLYLLGLSVSKKVGNAVKRNLIKRRLRSLTLKHAALCQGLALVFVPRSDCYHLDFWALEKHFLEMLTSIKNYIEQSLKRLEKRNNSYLCETIKRLF.

It belongs to the RnpA family. As to quaternary structure, consists of a catalytic RNA component (M1 or rnpB) and a protein subunit.

It catalyses the reaction Endonucleolytic cleavage of RNA, removing 5'-extranucleotides from tRNA precursor.. Its function is as follows. RNaseP catalyzes the removal of the 5'-leader sequence from pre-tRNA to produce the mature 5'-terminus. It can also cleave other RNA substrates such as 4.5S RNA. The protein component plays an auxiliary but essential role in vivo by binding to the 5'-leader sequence and broadening the substrate specificity of the ribozyme. The polypeptide is Ribonuclease P protein component (Helicobacter pylori (strain HPAG1)).